The chain runs to 127 residues: Large ribosomal subunit protein bL17 (127 aa).

It belongs to the bacterial ribosomal protein bL17 family. In terms of assembly, part of the 50S ribosomal subunit. Contacts protein L32.

This chain is Large ribosomal subunit protein bL17, found in Legionella pneumophila (strain Corby).